A 522-amino-acid polypeptide reads, in one-letter code: Target of rapamycin complex 2 subunit MAPKAP1 (522 aa).

Residue Ala2 is modified to N-acetylalanine. The interaction with MAP3K2 stretch occupies residues 2–184 (AFLDNPTIIL…KKIDVYLPLH (183 aa)). The segment at 2–267 (AFLDNPTIIL…GFSTLALVEK (266 aa)) is interaction with NBN. Thr86 carries the phosphothreonine modification. Ser128, Ser186, Ser315, and Ser356 each carry phosphoserine. The CRIM domain occupies 139–267 (QSILSVRLEQ…GFSTLALVEK (129 aa)). The SIN1-type RBD stretch occupies residues 279–353 (LFVRINAAHG…QSAWEFCLVR (75 aa)). Residues 382-487 (HYKSFKVSMI…IVLKVNYILE (106 aa)) form the SIN1-type PH domain. Arg393 contacts a 1,2-diacyl-sn-glycero-3-phospho-(1D-myo-inositol-3,4,5-trisphosphate). Thr398 is modified (phosphothreonine). Residues Lys428 and Lys464 each contribute to the a 1,2-diacyl-sn-glycero-3-phospho-(1D-myo-inositol-3,4,5-trisphosphate) site. The tract at residues 468-522 (FESDAATVNEIVLKVNYILESRASTARADYFAQKQRKLNRRTSFSFQKEKKSGQQ) is interaction with ATF2. At Ser510 the chain carries Phosphoserine.

The protein belongs to the SIN1 family. In terms of assembly, component of the mechanistic target of rapamycin complex 2 (mTORC2), consisting in two heterotretramers composed of MTOR, MLST8, RICTOR and MAPKAP1/SIN1. The mTORC2 core complex associates with PRR5/PROTOR1 and/or PRR5L/PROTOR2. Contrary to mTORC1, mTORC2 does not bind to and is not sensitive to FKBP12-rapamycin. Interacts with MAP3K2. Interacts with ATF2. Interacts with MAPK8. Interacts with GTP-bound HRAS and KRAS; inhibiting their activity. Interacts with IFNAR2. Interacts with CCDC28B. As to quaternary structure, interacts with NBN. Phosphorylation at Ser-128 by PKC promotes relocalization to the perinuclear region, where the mTORC2 complex specifically mediates phosphorylation of SGK1. Phosphorylated at Thr-86 by AKT1 or RPS6KB1 in the presence of growth factors; the effect of this phosphorylation is however unclear. According to two studies, phosphorylation at Thr-86 by AKT1 is part of a positive feedback loop that increases mTORC2 activation. According to another study, phosphorylation at Thr-86 and Thr-398 by RPS6KB1 promotes dissociation from the mTORC2 complex, leading to inhibit mTORC2 signaling. In terms of tissue distribution, ubiquitously expressed, with highest levels in heart and skeletal muscle.

It localises to the cell membrane. It is found in the endoplasmic reticulum membrane. Its subcellular location is the early endosome membrane. The protein resides in the late endosome membrane. The protein localises to the lysosome membrane. It localises to the golgi apparatus membrane. It is found in the mitochondrion outer membrane. Its subcellular location is the cytoplasm. The protein resides in the perinuclear region. The protein localises to the nucleus. It localises to the cytosol. Phosphatidylinositol 3,4,5-trisphosphate (PI(3,4,5)P3) promotes MTOR activation by relieving MAPKAP1/SIN1-mediated inhibition of MTOR that takes place in absence of PI(3,4,5)P3. Component of the mechanistic target of rapamycin complex 2 (mTORC2), which transduces signals from growth factors to pathways involved in proliferation, cytoskeletal organization, lipogenesis and anabolic output. In response to growth factors, mTORC2 phosphorylates and activates AGC protein kinase family members, including AKT (AKT1, AKT2 and AKT3), PKC (PRKCA, PRKCB and PRKCE) and SGK1. In contrast to mTORC1, mTORC2 is nutrient-insensitive. Within the mTORC2 complex, MAPKAP1/SIN1 acts as a substrate adapter which recognizes and binds AGC protein kinase family members for phosphorylation by MTOR. mTORC2 plays a critical role in AKT1 activation by mediating phosphorylation of different sites depending on the context, such as 'Thr-450', 'Ser-473', 'Ser-477' or 'Thr-479', facilitating the phosphorylation of the activation loop of AKT1 on 'Thr-308' by PDPK1/PDK1 which is a prerequisite for full activation. mTORC2 catalyzes the phosphorylation of SGK1 at 'Ser-422' and of PRKCA on 'Ser-657'. The mTORC2 complex also phosphorylates various proteins involved in insulin signaling, such as FBXW8 and IGF2BP1. mTORC2 acts upstream of Rho GTPases to regulate the actin cytoskeleton, probably by activating one or more Rho-type guanine nucleotide exchange factors. mTORC2 promotes the serum-induced formation of stress-fibers or F-actin. MAPKAP1 inhibits MAP3K2 by preventing its dimerization and autophosphorylation. Inhibits HRAS and KRAS independently of mTORC2 complex. Enhances osmotic stress-induced phosphorylation of ATF2 and ATF2-mediated transcription. Involved in ciliogenesis, regulates cilia length through its interaction with CCDC28B independently of mTORC2 complex. Functionally, in contrast to isoform 1, isoform 2 and isoform 6, isoform 4 is not a component of the a mTORC2 complex. The sequence is that of Target of rapamycin complex 2 subunit MAPKAP1 from Homo sapiens (Human).